Here is a 131-residue protein sequence, read N- to C-terminus: Con-Ins Q1b (131 aa).

The N-terminal stretch at 1 to 24 (MTTSSYFLLVALGLLLYLCQSSFG) is a signal peptide. Intrachain disulfides connect cysteine 29–cysteine 107, cysteine 41–cysteine 110, cysteine 53–cysteine 123, and cysteine 109–cysteine 114. The propeptide at 59-92 (LQGGTDDARKKRGRASLLRKRRGFLSMLKARAKR) is c peptide. Glutamate 118 carries the 4-carboxyglutamate; partial modification. Serine 130 is subject to Serine amide.

This sequence belongs to the insulin family. In terms of assembly, heterodimer of A and B chains; disulfide-linked. Expressed by the venom gland.

The protein resides in the secreted. Functionally, this venom insulin facilitates prey capture by rapidly inducing hypoglycemic shock. Intraperitoneal injection of this peptide into zebrafish lowers blood glucose with the same potency than human insulin. In vivo, when applied to water, this peptide reduces overall locomotor activity of zebrafish larvae, observed as a significant decrease in the percentage of time spent swimming and movement frequency. In Conus quercinus (Oak cone), this protein is Con-Ins Q1b.